Reading from the N-terminus, the 224-residue chain is Cytidylate kinase (224 aa).

11-19 (GPAAAGKST) lines the ATP pocket.

It belongs to the cytidylate kinase family. Type 1 subfamily.

The protein localises to the cytoplasm. It carries out the reaction CMP + ATP = CDP + ADP. The catalysed reaction is dCMP + ATP = dCDP + ADP. The sequence is that of Cytidylate kinase from Bacillus velezensis (strain DSM 23117 / BGSC 10A6 / LMG 26770 / FZB42) (Bacillus amyloliquefaciens subsp. plantarum).